Here is a 441-residue protein sequence, read N- to C-terminus: L-seryl-tRNA(Sec) selenium transferase (441 aa).

Lys-283 carries the N6-(pyridoxal phosphate)lysine modification.

Belongs to the SelA family. Pyridoxal 5'-phosphate is required as a cofactor.

Its subcellular location is the cytoplasm. It carries out the reaction L-seryl-tRNA(Sec) + selenophosphate + H(+) = L-selenocysteinyl-tRNA(Sec) + phosphate. It participates in aminoacyl-tRNA biosynthesis; selenocysteinyl-tRNA(Sec) biosynthesis; selenocysteinyl-tRNA(Sec) from L-seryl-tRNA(Sec) (bacterial route): step 1/1. Functionally, converts seryl-tRNA(Sec) to selenocysteinyl-tRNA(Sec) required for selenoprotein biosynthesis. The polypeptide is L-seryl-tRNA(Sec) selenium transferase (Campylobacter concisus (strain 13826)).